We begin with the raw amino-acid sequence, 241 residues long: Pyridoxine 5'-phosphate synthase (241 aa).

Residue Asn-7 participates in 3-amino-2-oxopropyl phosphate binding. A 1-deoxy-D-xylulose 5-phosphate-binding site is contributed by 9–10 (DH). 3-amino-2-oxopropyl phosphate is bound at residue Arg-18. His-43 functions as the Proton acceptor in the catalytic mechanism. Positions 45 and 50 each coordinate 1-deoxy-D-xylulose 5-phosphate. Glu-70 functions as the Proton acceptor in the catalytic mechanism. Thr-100 is a 1-deoxy-D-xylulose 5-phosphate binding site. His-191 (proton donor) is an active-site residue. Residues Gly-192 and 213–214 (GH) contribute to the 3-amino-2-oxopropyl phosphate site.

The protein belongs to the PNP synthase family. In terms of assembly, homooctamer; tetramer of dimers.

The protein resides in the cytoplasm. It catalyses the reaction 3-amino-2-oxopropyl phosphate + 1-deoxy-D-xylulose 5-phosphate = pyridoxine 5'-phosphate + phosphate + 2 H2O + H(+). It participates in cofactor biosynthesis; pyridoxine 5'-phosphate biosynthesis; pyridoxine 5'-phosphate from D-erythrose 4-phosphate: step 5/5. Functionally, catalyzes the complicated ring closure reaction between the two acyclic compounds 1-deoxy-D-xylulose-5-phosphate (DXP) and 3-amino-2-oxopropyl phosphate (1-amino-acetone-3-phosphate or AAP) to form pyridoxine 5'-phosphate (PNP) and inorganic phosphate. The protein is Pyridoxine 5'-phosphate synthase of Nostoc punctiforme (strain ATCC 29133 / PCC 73102).